Reading from the N-terminus, the 262-residue chain is Lysosomal-associated transmembrane protein 5 (262 aa).

The next 5 membrane-spanning stretches (helical) occupy residues 19 to 39 (IATT…FIEH), 64 to 84 (ISSF…LIGV), 92 to 112 (LLPF…TLLG), 134 to 154 (FPLM…LCSS), and 184 to 204 (FIKM…FKVY). Tyrosine 259 carries the phosphotyrosine modification.

Belongs to the LAPTM4/LAPTM5 transporter family. In terms of assembly, binds to ubiquitin.

It localises to the lysosome membrane. Its function is as follows. May have a special functional role during embryogenesis and in adult hematopoietic cells. The polypeptide is Lysosomal-associated transmembrane protein 5 (LAPTM5) (Pongo abelii (Sumatran orangutan)).